We begin with the raw amino-acid sequence, 110 residues long: NADH-quinone oxidoreductase subunit K (110 aa).

The next 3 helical transmembrane spans lie at 14 to 34 (VSQYFILSFILLGIGLFGMMV), 39 to 59 (ITILMSLELALNSVNIAFVGI), and 70 to 90 (IFALFTIALAAAEAAVGLGII).

Belongs to the complex I subunit 4L family. In terms of assembly, NDH-1 is composed of 14 different subunits. Subunits NuoA, H, J, K, L, M, N constitute the membrane sector of the complex.

It is found in the cell inner membrane. It carries out the reaction a quinone + NADH + 5 H(+)(in) = a quinol + NAD(+) + 4 H(+)(out). NDH-1 shuttles electrons from NADH, via FMN and iron-sulfur (Fe-S) centers, to quinones in the respiratory chain. The immediate electron acceptor for the enzyme in this species is believed to be ubiquinone. Couples the redox reaction to proton translocation (for every two electrons transferred, four hydrogen ions are translocated across the cytoplasmic membrane), and thus conserves the redox energy in a proton gradient. In Hydrogenobaculum sp. (strain Y04AAS1), this protein is NADH-quinone oxidoreductase subunit K.